The chain runs to 493 residues: Cobyric acid synthase (493 aa).

In terms of domain architecture, GATase cobBQ-type spans Pro-246 to Phe-440. The active-site Nucleophile is Cys-326. The active site involves His-432.

Belongs to the CobB/CobQ family. CobQ subfamily.

It participates in cofactor biosynthesis; adenosylcobalamin biosynthesis. Its function is as follows. Catalyzes amidations at positions B, D, E, and G on adenosylcobyrinic A,C-diamide. NH(2) groups are provided by glutamine, and one molecule of ATP is hydrogenolyzed for each amidation. The polypeptide is Cobyric acid synthase (Clostridium botulinum (strain Okra / Type B1)).